The primary structure comprises 146 residues: NADH-ubiquinone oxidoreductase chain 6 (146 aa).

4 helical membrane passes run 10–30 (ILAI…LLFV), 43–63 (LMGI…FLFI), 81–101 (VIVL…PIAI), and 124–144 (APML…AIAM).

This sequence belongs to the complex I subunit 6 family.

It localises to the mitochondrion membrane. It catalyses the reaction a ubiquinone + NADH + 5 H(+)(in) = a ubiquinol + NAD(+) + 4 H(+)(out). Core subunit of the mitochondrial membrane respiratory chain NADH dehydrogenase (Complex I) that is believed to belong to the minimal assembly required for catalysis. Complex I functions in the transfer of electrons from NADH to the respiratory chain. The immediate electron acceptor for the enzyme is believed to be ubiquinone. In Candida albicans (strain SC5314 / ATCC MYA-2876) (Yeast), this protein is NADH-ubiquinone oxidoreductase chain 6 (NAD6).